Reading from the N-terminus, the 405-residue chain is 11-beta-hydroxysteroid dehydrogenase type 2 (405 aa).

82–111 provides a ligand contact to NAD(+); that stretch reads TRAVLITGCDSGFGKETAKKLDSMGFTVLA. Substrate is bound at residue S219. Y232 acts as the Proton acceptor in catalysis. An essential for protein stability region spans residues 335–339; the sequence is RRRYY. Residues 377-387 are compositionally biased toward low complexity; the sequence is QPGQPGTTPPQ. A disordered region spans residues 377 to 405; it reads QPGQPGTTPPQDAAQDPNLSPGPSPAVAR. Residues 396 to 405 are compositionally biased toward pro residues; that stretch reads SPGPSPAVAR.

The protein belongs to the short-chain dehydrogenases/reductases (SDR) family. Interacts with ligand-free cytoplasmic NR3C2. Expressed in kidney, placenta, pancreas, prostate, ovary, small intestine and colon, and in lower levels in the spleen and testis. At midgestation, expressed at high levels in placenta and in fetal kidney and, at much lower levels, in fetal lung and testis.

It is found in the microsome. The protein resides in the endoplasmic reticulum. It carries out the reaction an 11beta-hydroxysteroid + NAD(+) = an 11-oxosteroid + NADH + H(+). The catalysed reaction is cortisol + NAD(+) = cortisone + NADH + H(+). It catalyses the reaction corticosterone + NAD(+) = 11-dehydrocorticosterone + NADH + H(+). The enzyme catalyses 11beta,17beta-dihydroxyandrost-4-ene-3-one + NAD(+) = 17beta-hydroxyandrost-4-ene-3,11-dione + NADH + H(+). It carries out the reaction 11beta-hydroxyandrost-4-ene-3,17-dione + NAD(+) = androst-4-ene-3,11,17-trione + NADH + H(+). Its pathway is steroid metabolism. Its activity is regulated as follows. Inhibited by glycyrrhetinic acid (derived from liquorice). Catalyzes the conversion of biologically active 11beta-hydroxyglucocorticoids (11beta-hydroxysteroid) such as cortisol, to inactive 11-ketoglucocorticoids (11-oxosteroid) such as cortisone, in the presence of NAD(+). Functions as a dehydrogenase (oxidase), thereby decreasing the concentration of active glucocorticoids, thus protecting the nonselective mineralocorticoid receptor from occupation by glucocorticoids. Plays an important role in maintaining glucocorticoids balance during preimplantation and protects the fetus from excessive maternal corticosterone exposure. Catalyzes the oxidation of 11beta-hydroxytestosterone (11beta,17beta-dihydroxyandrost-4-ene-3-one) to 11-ketotestosterone (17beta-hydroxyandrost-4-ene-3,11-dione), a major bioactive androgen. Catalyzes the conversion of 11beta-hydroxyandrostenedione (11beta-hydroxyandrost-4-ene-3,17-dione) to 11-ketoandrostenedione (androst-4-ene-3,11,17-trione), which can be further metabolized to 11-ketotestosterone. Converts 7-beta-25-dihydroxycholesterol to 7-oxo-25-hydroxycholesterol in vitro. 7-beta-25-dihydroxycholesterol (not 7-oxo-25-hydroxycholesterol) acts as a ligand for the G-protein-coupled receptor (GPCR) Epstein-Barr virus-induced gene 2 (EBI2) and may thereby regulate immune cell migration. May protect ovulating oocytes and fertilizing spermatozoa from the adverse effects of cortisol. The sequence is that of 11-beta-hydroxysteroid dehydrogenase type 2 from Homo sapiens (Human).